Here is a 418-residue protein sequence, read N- to C-terminus: Serine hydroxymethyltransferase (418 aa).

Residues L121 and 125–127 each bind (6S)-5,6,7,8-tetrahydrofolate; that span reads GHL. K230 carries the N6-(pyridoxal phosphate)lysine modification. 356–358 contacts (6S)-5,6,7,8-tetrahydrofolate; sequence SPF.

Belongs to the SHMT family. Homodimer. Pyridoxal 5'-phosphate serves as cofactor.

Its subcellular location is the cytoplasm. The catalysed reaction is (6R)-5,10-methylene-5,6,7,8-tetrahydrofolate + glycine + H2O = (6S)-5,6,7,8-tetrahydrofolate + L-serine. It participates in one-carbon metabolism; tetrahydrofolate interconversion. Its pathway is amino-acid biosynthesis; glycine biosynthesis; glycine from L-serine: step 1/1. Functionally, catalyzes the reversible interconversion of serine and glycine with tetrahydrofolate (THF) serving as the one-carbon carrier. This reaction serves as the major source of one-carbon groups required for the biosynthesis of purines, thymidylate, methionine, and other important biomolecules. Also exhibits THF-independent aldolase activity toward beta-hydroxyamino acids, producing glycine and aldehydes, via a retro-aldol mechanism. This chain is Serine hydroxymethyltransferase, found in Shewanella woodyi (strain ATCC 51908 / MS32).